A 160-amino-acid chain; its full sequence is MSQSDDRIVRIDLDGASMGPGDVNADHERRVAIADLLEGNRFRPDGEVDGPYALRLAIEHDRLVFDVRLEDDTPVHGFMFALGPLRRIVKDYFLICESYYEAVRDAPLERIEAIDMARRGVHNEGSTLLRERLVGKIDVDFDTARRLFTLICALHRRAAS.

It belongs to the UPF0262 family.

This chain is UPF0262 protein Mmar10_1128, found in Maricaulis maris (strain MCS10) (Caulobacter maris).